The primary structure comprises 420 residues: Serine hydroxymethyltransferase (420 aa).

Residues L121 and 125–127 (GHL) each bind (6S)-5,6,7,8-tetrahydrofolate. N6-(pyridoxal phosphate)lysine is present on K230.

The protein belongs to the SHMT family. As to quaternary structure, homodimer. Pyridoxal 5'-phosphate serves as cofactor.

The protein localises to the cytoplasm. It carries out the reaction (6R)-5,10-methylene-5,6,7,8-tetrahydrofolate + glycine + H2O = (6S)-5,6,7,8-tetrahydrofolate + L-serine. It functions in the pathway one-carbon metabolism; tetrahydrofolate interconversion. Its pathway is amino-acid biosynthesis; glycine biosynthesis; glycine from L-serine: step 1/1. Catalyzes the reversible interconversion of serine and glycine with tetrahydrofolate (THF) serving as the one-carbon carrier. This reaction serves as the major source of one-carbon groups required for the biosynthesis of purines, thymidylate, methionine, and other important biomolecules. Also exhibits THF-independent aldolase activity toward beta-hydroxyamino acids, producing glycine and aldehydes, via a retro-aldol mechanism. The protein is Serine hydroxymethyltransferase of Streptomyces avermitilis (strain ATCC 31267 / DSM 46492 / JCM 5070 / NBRC 14893 / NCIMB 12804 / NRRL 8165 / MA-4680).